The primary structure comprises 81 residues: Cytotoxin 3 (81 aa).

The N-terminal stretch at 1 to 21 (MKTLLLTLVVVTIVCLDLGYT) is a signal peptide. 4 cysteine pairs are disulfide-bonded: Cys24-Cys42, Cys35-Cys59, Cys63-Cys74, and Cys75-Cys80.

It belongs to the three-finger toxin family. Short-chain subfamily. Type IA cytotoxin sub-subfamily. Monomer in solution; Homodimer and oligomer in the presence of negatively charged lipids forming a pore with a size ranging between 20 and 30 Angstroms. Interacts with Kv channel-interacting protein 1 (KCNIP1) in a calcium-independent manner. In terms of tissue distribution, expressed by the venom gland.

It localises to the secreted. It is found in the target cell membrane. Basic protein that binds to cell membrane and depolarizes cardiomyocytes. This cytotoxin also possesses lytic activity on many other cells, including red blood cells. Interaction with sulfatides in the cell membrane induces pore formation and cell internalization. Cytotoxicity is due to pore formation, and to another mechanism independent of membrane-damaging activity. When internalized, it targets the mitochondrial membrane and induces mitochondrial swelling and fragmentation. It inhibits protein kinases C. It binds to the integrin alpha-V/beta-3 (ITGAV/ITGB3) with a moderate affinity. It also binds with high affinity to heparin. This Naja atra (Chinese cobra) protein is Cytotoxin 3.